We begin with the raw amino-acid sequence, 367 residues long: Apolipoprotein A-V (367 aa).

Positions 1–20 are cleaved as a signal peptide; sequence MVAVLTWALALLSAFATAQT. S56 is subject to Phosphoserine.

This sequence belongs to the apolipoprotein A1/A4/E family. As to quaternary structure, interacts with GPIHBP1. Interacts with SORL1; this interaction leads to APOA5 internalization and sorting either to lysosomes and degradation, or to the trans-Golgi network. Post-translationally, phosphorylated by FAM20C in the extracellular medium.

The protein resides in the secreted. It localises to the early endosome. The protein localises to the late endosome. It is found in the golgi apparatus. Its subcellular location is the trans-Golgi network. Its function is as follows. Minor apolipoprotein mainly associated with HDL and to a lesser extent with VLDL. May also be associated with chylomicrons. Important determinant of plasma triglyceride (TG) levels by both being a potent stimulator of apo-CII lipoprotein lipase (LPL) TG hydrolysis and an inhibitor of the hepatic VLDL-TG production rate (without affecting the VLDL-apoB production rate). Activates poorly lecithin:cholesterol acyltransferase (LCAT) and does not enhance efflux of cholesterol from macrophages. Binds heparin. The sequence is that of Apolipoprotein A-V (APOA5) from Phoca vitulina (Harbor seal).